The following is a 122-amino-acid chain: Acidic phospholipase A2 Tpu-E6b (122 aa).

Disulfide bonds link Cys26–Cys115, Cys28–Cys44, Cys43–Cys95, Cys49–Cys122, Cys50–Cys88, Cys57–Cys81, and Cys75–Cys86. Ca(2+)-binding residues include Tyr27, Gly29, and Gly31. Residue His47 is part of the active site. Residue Asp48 coordinates Ca(2+). Asp89 is an active-site residue.

Monomer. Ca(2+) is required as a cofactor. Expressed by the venom gland.

It localises to the secreted. The catalysed reaction is a 1,2-diacyl-sn-glycero-3-phosphocholine + H2O = a 1-acyl-sn-glycero-3-phosphocholine + a fatty acid + H(+). Its function is as follows. Snake venom phospholipase A2 (PLA2) that weakly inhibits ADP-induced platelet aggregation when tested on platelet rich plasma from human and rabbit blood (15-25% of inhibition at 5-10 ug of enzyme). Exhibits moderate hydrolytic activities toward L-dipalmitoyl phosphatidylcholine. PLA2 catalyzes the calcium-dependent hydrolysis of the 2-acyl groups in 3-sn-phosphoglycerides. The protein is Acidic phospholipase A2 Tpu-E6b of Craspedocephalus puniceus (Flat-nosed pitviper).